The following is a 71-amino-acid chain: Small ribosomal subunit protein bS21 (71 aa).

The protein belongs to the bacterial ribosomal protein bS21 family.

This chain is Small ribosomal subunit protein bS21, found in Chromohalobacter salexigens (strain ATCC BAA-138 / DSM 3043 / CIP 106854 / NCIMB 13768 / 1H11).